The following is a 142-amino-acid chain: Salivary protein 15b (142 aa).

An N-terminal signal peptide occupies residues 1-20 (MKYLGLALISAVFLIGTCQA). 3 disulfides stabilise this stretch: Cys-27/Cys-44, Cys-40/Cys-108, and Cys-91/Cys-117.

The protein belongs to the PBP/GOBP family. Female salivary gland.

It localises to the secreted. Its function is as follows. Inhibits contact coagulation pathway activation in the host by sequestering anionic polymers, such as dextran sulfate and heparin, and thus blocking interaction of protein components of the pathway with negatively charged surfaces. Inhibits dextran sulfate-mediated autoactivation of host coagulation factor XII (F12). Inhibits dextran sulfate-mediated activation of host factor XI (F11) by activated F12. Inhibits polyphosphate-induced plasma extravasation at the injection site in mouse model, probably via inhibition of bradykinin generation in host skin. The protein is Salivary protein 15b of Phlebotomus duboscqi (Sandfly).